We begin with the raw amino-acid sequence, 275 residues long: 4-hydroxy-tetrahydrodipicolinate reductase (275 aa).

NAD(+) contacts are provided by residues 13 to 18 and 108 to 110; these read GAGGKM and GTT. The active-site Proton donor/acceptor is histidine 164. Histidine 165 contributes to the (S)-2,3,4,5-tetrahydrodipicolinate binding site. Lysine 168 functions as the Proton donor in the catalytic mechanism. 174–175 contacts (S)-2,3,4,5-tetrahydrodipicolinate; that stretch reads GT.

This sequence belongs to the DapB family.

The protein localises to the cytoplasm. The enzyme catalyses (S)-2,3,4,5-tetrahydrodipicolinate + NAD(+) + H2O = (2S,4S)-4-hydroxy-2,3,4,5-tetrahydrodipicolinate + NADH + H(+). It catalyses the reaction (S)-2,3,4,5-tetrahydrodipicolinate + NADP(+) + H2O = (2S,4S)-4-hydroxy-2,3,4,5-tetrahydrodipicolinate + NADPH + H(+). The protein operates within amino-acid biosynthesis; L-lysine biosynthesis via DAP pathway; (S)-tetrahydrodipicolinate from L-aspartate: step 4/4. Functionally, catalyzes the conversion of 4-hydroxy-tetrahydrodipicolinate (HTPA) to tetrahydrodipicolinate. This chain is 4-hydroxy-tetrahydrodipicolinate reductase, found in Picosynechococcus sp. (strain ATCC 27264 / PCC 7002 / PR-6) (Agmenellum quadruplicatum).